A 716-amino-acid polypeptide reads, in one-letter code: ATP-dependent DNA helicase DinG (716 aa).

Positions 17 to 294 (ALQEQIPDFI…TCMEQFRPKT (278 aa)) constitute a Helicase ATP-binding domain. 54-61 (APTGVGKT) contributes to the ATP binding site. Cysteine 120 contributes to the [4Fe-4S] cluster binding site. The short motif at 131-134 (EPTQ) is the DEAH box element. [4Fe-4S] cluster contacts are provided by cysteine 194, cysteine 199, and cysteine 205. The DEAH box motif lies at 248-251 (DEGH). Residues 517 to 698 (HIAEMAAFFR…VFPIEQPEVP (182 aa)) enclose the Helicase C-terminal domain.

Belongs to the helicase family. DinG subfamily. Type 1 sub-subfamily. [4Fe-4S] cluster is required as a cofactor.

It catalyses the reaction Couples ATP hydrolysis with the unwinding of duplex DNA at the replication fork by translocating in the 5'-3' direction. This creates two antiparallel DNA single strands (ssDNA). The leading ssDNA polymer is the template for DNA polymerase III holoenzyme which synthesizes a continuous strand.. The enzyme catalyses ATP + H2O = ADP + phosphate + H(+). Its function is as follows. DNA-dependent ATPase and 5'-3' DNA helicase. Unwinds D-loops, R-loops, forked DNA and G-quadruplex DNA. This Escherichia coli O157:H7 protein is ATP-dependent DNA helicase DinG.